Reading from the N-terminus, the 186-residue chain is ATP synthase subunit b' (186 aa).

A helical membrane pass occupies residues 39–59 (IFWLLLALGAIYWLLKNIAIP).

Belongs to the ATPase B chain family. F-type ATPases have 2 components, F(1) - the catalytic core - and F(0) - the membrane proton channel. F(1) has five subunits: alpha(3), beta(3), gamma(1), delta(1), epsilon(1). F(0) has four main subunits: a(1), b(1), b'(1) and c(10-14). The alpha and beta chains form an alternating ring which encloses part of the gamma chain. F(1) is attached to F(0) by a central stalk formed by the gamma and epsilon chains, while a peripheral stalk is formed by the delta, b and b' chains.

The protein resides in the cellular chromatophore membrane. F(1)F(0) ATP synthase produces ATP from ADP in the presence of a proton or sodium gradient. F-type ATPases consist of two structural domains, F(1) containing the extramembraneous catalytic core and F(0) containing the membrane proton channel, linked together by a central stalk and a peripheral stalk. During catalysis, ATP synthesis in the catalytic domain of F(1) is coupled via a rotary mechanism of the central stalk subunits to proton translocation. Functionally, component of the F(0) channel, it forms part of the peripheral stalk, linking F(1) to F(0). The b'-subunit is a diverged and duplicated form of b found in plants and photosynthetic bacteria. The protein is ATP synthase subunit b' of Rhodobacter capsulatus (Rhodopseudomonas capsulata).